Here is a 117-residue protein sequence, read N- to C-terminus: Protein Turandot F (117 aa).

Positions 1–22 are cleaved as a signal peptide; sequence MKTVILFSFLLVLLGYLGAGHA.

It belongs to the Turandot family.

The protein resides in the secreted. Its function is as follows. A humoral factor that may play a role in stress tolerance. In Drosophila sechellia (Fruit fly), this protein is Protein Turandot F.